A 395-amino-acid chain; its full sequence is Nucleoside diphosphate kinase homolog 7 (395 aa).

One can recognise a DM10 domain in the interval 22 to 110; it reads QSERFAFIAE…YTARQLGSRK (89 aa).

The protein belongs to the NDK family. Component of sperm flagellar doublet microtubules. Component of the gamma-tubulin ring complex. In terms of tissue distribution, widely expressed. Expressed in the flagellum of epididymal sperm but not in testicular sperm (at protein level).

It is found in the cytoplasm. It localises to the cytoskeleton. The protein resides in the microtubule organizing center. The protein localises to the centrosome. Its subcellular location is the nucleus. It is found in the spindle. It localises to the cilium axoneme. The protein resides in the flagellum axoneme. The protein localises to the cell projection. Its subcellular location is the cilium. Functionally, possesses an intrinsic kinase activity. Displays 3'-5' exonuclease activity with a preference for single-stranded DNA. Does not seem to have nucleoside diphosphate kinase activity. Functional component of the gamma-tubulin ring complex, implicated in the regulation of the microtubule-nucleating activity of the gamma-tubulin ring complex in centrosomes, in a kinase activity-dependent manner. Part of the dynein-decorated doublet microtubules (DMTs) in cilia axoneme, which is required for motile cilia beating. The sequence is that of Nucleoside diphosphate kinase homolog 7 (Nme7) from Rattus norvegicus (Rat).